The sequence spans 37 residues: Esculentin-2A (37 aa).

The cysteines at positions 31 and 37 are disulfide-linked.

This sequence belongs to the frog skin active peptide (FSAP) family. Esculentin subfamily. Expressed by the skin glands.

It localises to the secreted. Shows antibacterial activity against representative Gram-negative and Gram-positive bacterial species, and hemolytic activity. The protein is Esculentin-2A of Pelophylax lessonae (Pool frog).